A 147-amino-acid polypeptide reads, in one-letter code: MAWEGTYERLFFLALGSSYHVPSLANNIMNFLEGARLYKKNTTYVATLIYEFIILNDASMTPDVKCFWLPVKLPHFLLLSELYSIIEKYKLAKVYYNRGTYDVHTVSANSLVISGSMPTGIIIGSSSPLDYVGVQVNRQLEMDLPIE.

This is an uncharacterized protein from Saccharomyces cerevisiae (strain ATCC 204508 / S288c) (Baker's yeast).